The primary structure comprises 774 residues: Effector protein hopW1-1 (774 aa).

2 disordered regions span residues 1–33 (MSPA…QSPQ) and 301–340 (CQAG…VPGQ). Low complexity predominate over residues 9 to 23 (TPHSFPPSFTGTSSS). Residues 24 to 33 (AENSHAQSPQ) are compositionally biased toward polar residues.

This sequence belongs to the HopW family. As to quaternary structure, interacts (via C-terminus) with Arabidopsis WIN1, WIN2 and WIN3.

Its subcellular location is the secreted. In terms of biological role, induces hypersensitive response (HR). This is Effector protein hopW1-1 (hopW1-1) from Pseudomonas syringae pv. maculicola.